We begin with the raw amino-acid sequence, 191 residues long: Small ribosomal subunit protein uS7 (191 aa).

A disordered region spans residues 56–80; sequence NKSGEQGDGDGESGGKAGGIKKRSL.

The protein belongs to the universal ribosomal protein uS7 family. Part of the 30S ribosomal subunit. Contacts proteins S9 and S11.

Its function is as follows. One of the primary rRNA binding proteins, it binds directly to 16S rRNA where it nucleates assembly of the head domain of the 30S subunit. Is located at the subunit interface close to the decoding center, probably blocks exit of the E-site tRNA. The sequence is that of Small ribosomal subunit protein uS7 from Coxiella burnetii (strain RSA 493 / Nine Mile phase I).